The sequence spans 693 residues: MEFPPLWLCLGFHFLIVEWRSGPGTATAASQGGCKVVDGVADCRGLNLASVPSSLPPHSRMLILDANPLKDLWNHSLQAYPRLENLSLHSCHLDRISHYAFREQGHLRNLVLADNRLSENYKESAAALHTLLGLRRLDLSGNSLTEDMAALMLQNLSSLEVVSLARNTLMRLDDSIFEGLEHLVELDLQRNYIFEIEGGAFDGLTELRRLNLAYNNLPCIVDFSLTQLRFLNVSYNILEWFLAAREEVAFELEILDLSHNQLLFFPLLPQCGKLHTLLLQDNNMGFYRELYNTSSPQEMVAQFLLVDGNVTNITTVNLWEEFSSSDLSALRFLDMSQNQFRHLPDGFLKKTPSLSHLNLNQNCLKMLHIREHEPPGALTELDLSHNQLAELHLAPGLTGSLRNLRVFNLSSNQLLGVPTGLFDNASSITTIDMSHNQISLCPQMVPVDWEGPPSCVDFRNMGSLRSLSLDGCGLKALQDCPFQGTSLTHLDLSSNWGVLNGSISPLWAVAPTLQVLSLRDVGLGSGAAEMDFSAFGNLRALDLSGNSLTSFPKFKGSLALRTLDLRRNSLTALPQRVVSEQPLRGLQTIYLSQNPYDCCGVEGWGALQQHFKTVADLSMVTCNLSSKIVRVVELPEGLPQGCKWEQVDTGLFYLVLILPSCLTLLVACTVVFLTFKKPLLQVIKSRCHWSSIY.

Positions 1–19 (MEFPPLWLCLGFHFLIVEW) are cleaved as a signal peptide. At 20 to 651 (RSGPGTATAA…CKWEQVDTGL (632 aa)) the chain is on the extracellular side. Residues 29 to 56 (ASQGGCKVVDGVADCRGLNLASVPSSLP) form the LRRNT domain. LRR repeat units follow at residues 58 to 79 (HSRM…SLQA), 82 to 103 (RLEN…AFRE), 106 to 127 (HLRN…SAAA), 133 to 155 (GLRR…MLQN), 158 to 179 (SLEV…IFEG), 182 to 203 (HLVE…AFDG), 206 to 227 (ELRR…SLTQ), 228 to 239 (LRFLNVSYNILE), 251 to 272 (ELEI…PQCG), and 273 to 294 (KLHT…YNTS). Asn-74 and Asn-85 each carry an N-linked (GlcNAc...) asparagine glycan. Asn-155 carries N-linked (GlcNAc...) asparagine glycosylation. N-linked (GlcNAc...) asparagine glycosylation is present at Asn-232. N-linked (GlcNAc...) asparagine glycosylation is found at Asn-292, Asn-309, and Asn-312. LRR repeat units lie at residues 329 to 350 (ALRF…FLKK), 353 to 374 (SLSH…EHEP), 377 to 398 (ALTE…PGLT), 403 to 424 (NLRV…LFDN), 427 to 448 (SITT…VPVD), 463 to 484 (SLRS…PFQG), 486 to 507 (SLTH…SPLW), 512 to 533 (TLQV…MDFS), 537 to 558 (NLRA…KGSL), 559 to 580 (ALRT…VVSE), and 585 to 605 (GLQT…EGWG). N-linked (GlcNAc...) asparagine glycosylation is found at Asn-408 and Asn-424. The N-linked (GlcNAc...) asparagine glycan is linked to Asn-500. In terms of domain architecture, LRRCT spans 606–644 (ALQQHFKTVADLSMVTCNLSSKIVRVVELPEGLPQGCKW). N-linked (GlcNAc...) asparagine glycosylation is present at Asn-623. Residues 652–672 (FYLVLILPSCLTLLVACTVVF) traverse the membrane as a helical segment. Residues 673 to 693 (LTFKKPLLQVIKSRCHWSSIY) lie on the Cytoplasmic side of the membrane.

This sequence belongs to the LRRC32/LRRC33 family. In terms of assembly, interacts with TGFB1; associates via disulfide bonds with the Latency-associated peptide chain (LAP) regulatory chain of TGFB1, leading to regulate activation of TGF-beta-1. Interacts (via LRR repeats) with TLR2, TLR3, TLR4, TLR9 and probably other Toll-like receptors. Interacts with CYBB/NOX2; the interaction is direct. N-glycosylated. Mainly expressed in cells of hematopoietic origin, such as in immune organs such as lymph nodes, thymus and spleen. Among leukocytes, expressed at higher level in myeloid cell such as macrophages, neutrophils and dendritic cells. Highly expressed in central nervous system-resident macrophages, including microglia and perivascular macrophages.

The protein localises to the cell membrane. Its subcellular location is the endoplasmic reticulum membrane. Its function is as follows. Key regulator of transforming growth factor beta-1 (TGFB1) specifically required for microglia function in the nervous system. Required for activation of latent TGF-beta-1 in macrophages and microglia: associates specifically via disulfide bonds with the Latency-associated peptide (LAP), which is the regulatory chain of TGFB1, and regulates integrin-dependent activation of TGF-beta-1. TGF-beta-1 activation mediated by LRRC33/NRROS is highly localized: there is little spreading of TGF-beta-1 activated from one microglial cell to neighboring microglia, suggesting the existence of localized and selective activation of TGF-beta-1 by LRRC33/NRROS. Indirectly plays a role in Toll-like receptor (TLR) signaling: ability to inhibit TLR-mediated NF-kappa-B activation and cytokine production is probably a consequence of its role in TGF-beta-1 signaling. In Mus musculus (Mouse), this protein is Transforming growth factor beta activator LRRC33.